Here is a 66-residue protein sequence, read N- to C-terminus: KEGYLVDLHTGCKYTCVGLGDNDYCVRECRLRYYDSAHGYCYAFGCWCTHLYEQAVVWPLPNKRCK.

The 66-residue stretch at 1-66 (KEGYLVDLHT…VWPLPNKRCK (66 aa)) folds into the LCN-type CS-alpha/beta domain. Disulfide bonds link Cys-12–Cys-65, Cys-16–Cys-41, Cys-25–Cys-46, and Cys-29–Cys-48.

The protein belongs to the long (4 C-C) scorpion toxin superfamily. Sodium channel inhibitor family. Beta subfamily. As to expression, expressed by the venom gland.

It localises to the secreted. Beta toxins bind voltage-independently at site-4 of sodium channels (Nav) and reduces peak current and shifts the voltage of activation toward more negative potentials thereby affecting sodium channel activation and promoting spontaneous and repetitive firing. Has an inhibitory effect on voltage-gated sodium channel hNav1.6/SCN8A, affecting both the activation and inactivation processes. Also reduces the peak current of hNav1.5/SCN5A but does not shift its voltage of activation. This toxin is active against mammals and lethal to mice. The sequence is that of Beta-toxin Cb2 from Centruroides baergi (Scorpion).